The sequence spans 251 residues: Homeobox protein notochord (251 aa).

Pro residues predominate over residues 1–14 (MPSPRPRGSPPPAP). Residues 1–47 (MPSPRPRGSPPPAPSGSRVRPPRSGRSPAPRSPTGPNTPRAPGRFES) form a disordered region. Positions 15 to 35 (SGSRVRPPRSGRSPAPRSPTG) are enriched in low complexity. Residues 156–215 (QKRVRTMFNLEQLEELEKVFAKQHNLVGKKRAQLAARLKLTENQVRVWFQNRRVKYQKQQ) constitute a DNA-binding region (homeobox). The segment covering 224–242 (AEAASLDEPSSSSIASIQS) has biased composition (low complexity). Residues 224–251 (AEAASLDEPSSSSIASIQSDDAESGVDG) are disordered.

It is found in the nucleus. Transcription regulator acting downstream of both FOXA2 and Brachyury (T) during notochord development. Required for node morphogenesis. Is essential for cilia formation in the posterior notochord (PNC) and for left-right patterning; acts upstream of FOXJ1 and RFX3 in this process and is required for the expression of various components important for axonemal assembly and function. Plays a role in regulating axial versus paraxial cell fate. Activates the transcription of ciliary proteins C11orf97 homolog, FAM183B and SPACA9 in the embryonic ventral node. The polypeptide is Homeobox protein notochord (NOTO) (Homo sapiens (Human)).